The sequence spans 551 residues: Chaperonin GroEL 4 (551 aa).

ATP is bound by residues 30 to 33 (TLGP), Lys51, 87 to 91 (DGTTT), Gly415, and Asp495.

The protein belongs to the chaperonin (HSP60) family. Forms a cylinder of 14 subunits composed of two heptameric rings stacked back-to-back. Interacts with the co-chaperonin GroES.

The protein localises to the cytoplasm. The enzyme catalyses ATP + H2O + a folded polypeptide = ADP + phosphate + an unfolded polypeptide.. Functionally, together with its co-chaperonin GroES, plays an essential role in assisting protein folding. The GroEL-GroES system forms a nano-cage that allows encapsulation of the non-native substrate proteins and provides a physical environment optimized to promote and accelerate protein folding. The polypeptide is Chaperonin GroEL 4 (Mesorhizobium japonicum (strain LMG 29417 / CECT 9101 / MAFF 303099) (Mesorhizobium loti (strain MAFF 303099))).